Consider the following 935-residue polypeptide: Phosphoenolpyruvate carboxylase (935 aa).

Catalysis depends on residues H161 and K593.

This sequence belongs to the PEPCase type 1 family. The cofactor is Mg(2+).

The catalysed reaction is oxaloacetate + phosphate = phosphoenolpyruvate + hydrogencarbonate. Forms oxaloacetate, a four-carbon dicarboxylic acid source for the tricarboxylic acid cycle. This is Phosphoenolpyruvate carboxylase from Mycobacterium avium (strain 104).